Here is a 139-residue protein sequence, read N- to C-terminus: uncharacterized protein (139 aa).

3 consecutive transmembrane segments (helical) span residues 38-60 (YFLH…LYVF), 72-94 (FIIL…CAGS), and 114-136 (ITVV…LIVA).

The protein localises to the cell membrane. This is an uncharacterized protein from Treponema pallidum (strain Nichols).